The sequence spans 566 residues: Amino acid transporter 6-1 (566 aa).

Transmembrane regions (helical) follow at residues 65–85 (YVLL…FYGW), 137–157 (MTFA…DWLG), 158–178 (PLWT…FLAF), 187–207 (YPAL…TLCI), 216–236 (GLII…PLVL), 250–270 (VSIG…LLFM), 334–354 (FFSI…WATS), 367–387 (DVVS…ILLG), 392–412 (VVGI…TYVF), 423–443 (LSAC…YVYV), and 455–475 (LIGI…PLYE). N-linked (GlcNAc...) asparagine glycosylation occurs at Asn476. The chain crosses the membrane as a helical span at residues 489-509 (IQIAMTALLCVQYVWIFILGF).

Belongs to the SLC43A transporter (TC 2.A.1.44) family.

Its subcellular location is the cell membrane. It carries out the reaction L-lysine(in) = L-lysine(out). The catalysed reaction is L-arginine(in) = L-arginine(out). It catalyses the reaction L-methionine(in) = L-methionine(out). The enzyme catalyses L-leucine(in) = L-leucine(out). Its function is as follows. Cationic and neutral amino acid transporter. Transports lysine with high affinity. Can transport arginine, methionine and leucine. Does not require inorganic ions, such as sodium, chloride, potassium, calcium or magnesium, for transport activity. In Toxoplasma gondii (strain ATCC 50611 / Me49), this protein is Amino acid transporter 6-1.